The sequence spans 426 residues: Histidine--tRNA ligase (426 aa).

Belongs to the class-II aminoacyl-tRNA synthetase family.

It is found in the cytoplasm. It carries out the reaction tRNA(His) + L-histidine + ATP = L-histidyl-tRNA(His) + AMP + diphosphate + H(+). The sequence is that of Histidine--tRNA ligase from Saccharolobus islandicus (strain Y.G.57.14 / Yellowstone #1) (Sulfolobus islandicus).